The sequence spans 220 residues: CASP-like protein 1E1 (220 aa).

Residues 1–57 lie on the Cytoplasmic side of the membrane; that stretch reads METPTPRVKPGFNGVGVGMGSSVNGSSRRAGYYMGPAGAVAVAGGGRAAAAAPVDGC. A helical membrane pass occupies residues 58–78; it reads SVALRVFVLAATLVSAVVMGV. Over 79-108 the chain is Extracellular; it reads DRQTSTIRITVTDALPPLEVPLTANWSYSS. N-linked (GlcNAc...) asparagine glycosylation is present at N103. Residues 109–129 traverse the membrane as a helical segment; it reads AFVYFVVANAMVCLFSAAALA. Residues 130-144 lie on the Cytoplasmic side of the membrane; that stretch reads ACRSRAAMVPVMVGD. The helical transmembrane segment at 145 to 165 threads the bilayer; it reads LLALALLYSAVGAAAEFGILG. The Extracellular portion of the chain corresponds to 166–187; it reads ERGNSHVRWPKVCNVYGRFCER. The chain crosses the membrane as a helical span at residues 188 to 208; the sequence is AMAAVIVSLIAAFANLVLLML. The Cytoplasmic segment spans residues 209 to 220; sequence NILTIHKSSSYY.

The protein belongs to the Casparian strip membrane proteins (CASP) family. Homodimer and heterodimers.

The protein localises to the cell membrane. This is CASP-like protein 1E1 from Zea mays (Maize).